The sequence spans 250 residues: ATP synthase subunit a (250 aa).

The next 5 helical transmembrane spans lie at 27 to 47 (TDTVLSTAIAALIVLALAFYL), 83 to 103 (IAPFVLPLAVTIFVFILISNW), 129 to 149 (INYVLALALFVFVCYHAAGIW), 191 to 211 (IFAGSILVALIALFPPYIMWA), and 219 to 239 (FDLFVGAIQAFIFALLTILYF).

It belongs to the ATPase A chain family. As to quaternary structure, F-type ATPases have 2 components, CF(1) - the catalytic core - and CF(0) - the membrane proton channel. CF(1) has five subunits: alpha(3), beta(3), gamma(1), delta(1), epsilon(1). CF(0) has three main subunits: a(1), b(2) and c(9-12). The alpha and beta chains form an alternating ring which encloses part of the gamma chain. CF(1) is attached to CF(0) by a central stalk formed by the gamma and epsilon chains, while a peripheral stalk is formed by the delta and b chains.

Its subcellular location is the cell membrane. In terms of biological role, key component of the proton channel; it plays a direct role in the translocation of protons across the membrane. The polypeptide is ATP synthase subunit a (Mycobacterium ulcerans (strain Agy99)).